The following is a 249-amino-acid chain: Pyridoxine 5'-phosphate synthase (249 aa).

3-amino-2-oxopropyl phosphate is bound at residue N7. 1-deoxy-D-xylulose 5-phosphate is bound at residue 9 to 10 (DH). R18 is a 3-amino-2-oxopropyl phosphate binding site. The Proton acceptor role is filled by H43. 1-deoxy-D-xylulose 5-phosphate-binding residues include R45 and H50. The active-site Proton acceptor is the E70. T100 contacts 1-deoxy-D-xylulose 5-phosphate. Catalysis depends on H190, which acts as the Proton donor. 3-amino-2-oxopropyl phosphate-binding positions include G191 and 212–213 (GH).

It belongs to the PNP synthase family. In terms of assembly, homooctamer; tetramer of dimers.

The protein localises to the cytoplasm. It catalyses the reaction 3-amino-2-oxopropyl phosphate + 1-deoxy-D-xylulose 5-phosphate = pyridoxine 5'-phosphate + phosphate + 2 H2O + H(+). It participates in cofactor biosynthesis; pyridoxine 5'-phosphate biosynthesis; pyridoxine 5'-phosphate from D-erythrose 4-phosphate: step 5/5. Functionally, catalyzes the complicated ring closure reaction between the two acyclic compounds 1-deoxy-D-xylulose-5-phosphate (DXP) and 3-amino-2-oxopropyl phosphate (1-amino-acetone-3-phosphate or AAP) to form pyridoxine 5'-phosphate (PNP) and inorganic phosphate. This is Pyridoxine 5'-phosphate synthase from Synechococcus sp. (strain CC9311).